The chain runs to 431 residues: Mannan endo-1,4-beta-mannosidase 5 (431 aa).

An N-terminal signal peptide occupies residues 1–24; that stretch reads MVPTRNRPMLRILGFFICAAFIYL. N45 carries N-linked (GlcNAc...) asparagine glycosylation. W97 contributes to the substrate binding site. N168 carries an N-linked (GlcNAc...) asparagine glycan. Residue N213 coordinates substrate. Residue E214 is the Proton donor of the active site. The N-linked (GlcNAc...) asparagine glycan is linked to N282. Substrate is bound at residue Y294. Residue N301 is glycosylated (N-linked (GlcNAc...) asparagine). E334 (nucleophile) is an active-site residue. W376 is a binding site for substrate.

Belongs to the glycosyl hydrolase 5 (cellulase A) family. In terms of tissue distribution, expressed in stems.

Its subcellular location is the secreted. It carries out the reaction Random hydrolysis of (1-&gt;4)-beta-D-mannosidic linkages in mannans, galactomannans and glucomannans.. This chain is Mannan endo-1,4-beta-mannosidase 5 (MAN5), found in Arabidopsis thaliana (Mouse-ear cress).